We begin with the raw amino-acid sequence, 500 residues long: uncharacterized protein (500 aa).

A helical membrane pass occupies residues 27–47 (IFALILIVFGFIIAPLLPGIF).

It is found in the membrane. This is an uncharacterized protein from Borreliella burgdorferi (strain ATCC 35210 / DSM 4680 / CIP 102532 / B31) (Borrelia burgdorferi).